Reading from the N-terminus, the 1870-residue chain is Dedicator of cytokinesis protein 5 (1870 aa).

Positions 8–69 (KRQKYGVAIY…PETYIHLKEA (62 aa)) constitute an SH3 domain. At S365 the chain carries Phosphoserine. The C2 DOCK-type domain occupies 443-627 (RNDIYVTLIH…DSFQIATLIC (185 aa)). N6-acetyllysine is present on K818. The 412-residue stretch at 1231–1642 (YKEKKREDIY…VEKHYGVITL (412 aa)) folds into the DOCKER domain. Positions 1679–1702 (VVSTSSNSSDNAPSRPGSDGSILE) are disordered. A phosphoserine mark is found at S1756, S1766, S1785, and S1789. The interval 1772-1870 (NRLSPFHGSS…GIPTSEPGSQ (99 aa)) is disordered. The segment covering 1784-1794 (QSTPLSPPPLT) has biased composition (pro residues). Position 1794 is a phosphothreonine (T1794). Polar residues predominate over residues 1797–1808 (ATRTLSSPSLQT). T1814 is subject to Phosphothreonine. Residues 1815 to 1824 (PVPPPPPPKS) are compositionally biased toward pro residues. S1834 and S1869 each carry phosphoserine.

It belongs to the DOCK family. As to quaternary structure, interacts with CRK and CRKL. Interacts (via N-terminus) with tensin TNS3 (via N-terminus); the interaction increases DOCK5 guanine nucleotide exchange activity towards Rac. Interacts with ELMO1.

The protein localises to the cytoplasm. It is found in the cell membrane. Its subcellular location is the cell projection. It localises to the podosome. In terms of biological role, guanine nucleotide exchange factor (GEF) for Rho and Rac. GEF proteins activate small GTPases by exchanging bound GDP for free GTP. Along with DOCK1, mediates CRK/CRKL regulation of epithelial and endothelial cell spreading and migration on type IV collagen. The chain is Dedicator of cytokinesis protein 5 (DOCK5) from Homo sapiens (Human).